We begin with the raw amino-acid sequence, 131 residues long: Large ribosomal subunit protein bL21 (131 aa).

The protein belongs to the bacterial ribosomal protein bL21 family. In terms of assembly, part of the 50S ribosomal subunit. Contacts protein L20.

Functionally, this protein binds to 23S rRNA in the presence of protein L20. In Cereibacter sphaeroides (strain ATCC 17023 / DSM 158 / JCM 6121 / CCUG 31486 / LMG 2827 / NBRC 12203 / NCIMB 8253 / ATH 2.4.1.) (Rhodobacter sphaeroides), this protein is Large ribosomal subunit protein bL21.